A 690-amino-acid chain; its full sequence is Guanylate cyclase soluble subunit alpha-1 (690 aa).

The residue at position 266 (serine 266) is a Phosphoserine. Residues 480–607 (TMLFSDIVGF…NNVTLANKFE (128 aa)) form the Guanylate cyclase domain.

Belongs to the adenylyl cyclase class-4/guanylyl cyclase family. As to quaternary structure, the active enzyme is formed by a heterodimer of an alpha and a beta subunit. Heterodimer with GUCY1B1. Mg(2+) is required as a cofactor. Requires Mn(2+) as cofactor.

The protein localises to the cytoplasm. It catalyses the reaction GTP = 3',5'-cyclic GMP + diphosphate. With respect to regulation, activated by nitric oxide in the presence of magnesium or manganese ions. The polypeptide is Guanylate cyclase soluble subunit alpha-1 (Gucy1a1) (Rattus norvegicus (Rat)).